A 61-amino-acid polypeptide reads, in one-letter code: Small ribosomal subunit protein uS14B (61 aa).

Zn(2+) is bound by residues cysteine 24, cysteine 27, cysteine 40, and cysteine 43.

This sequence belongs to the universal ribosomal protein uS14 family. Zinc-binding uS14 subfamily. In terms of assembly, part of the 30S ribosomal subunit. Contacts proteins S3 and S10. Zn(2+) serves as cofactor.

In terms of biological role, binds 16S rRNA, required for the assembly of 30S particles and may also be responsible for determining the conformation of the 16S rRNA at the A site. The polypeptide is Small ribosomal subunit protein uS14B (Staphylococcus saprophyticus subsp. saprophyticus (strain ATCC 15305 / DSM 20229 / NCIMB 8711 / NCTC 7292 / S-41)).